The primary structure comprises 732 residues: Polyribonucleotide nucleotidyltransferase (732 aa).

Residues D515 and D521 each coordinate Mg(2+). The KH domain occupies P581–I641. Positions G672–V731 constitute an S1 motif domain.

It belongs to the polyribonucleotide nucleotidyltransferase family. The cofactor is Mg(2+).

It localises to the cytoplasm. It carries out the reaction RNA(n+1) + phosphate = RNA(n) + a ribonucleoside 5'-diphosphate. In terms of biological role, involved in mRNA degradation. Catalyzes the phosphorolysis of single-stranded polyribonucleotides processively in the 3'- to 5'-direction. This chain is Polyribonucleotide nucleotidyltransferase, found in Campylobacter concisus (strain 13826).